The following is a 3948-amino-acid chain: Hybrid PKS-NRPS synthetase fsa1 (3948 aa).

The Ketosynthase family 3 (KS3) domain maps to 4 to 438 (SEPIAVIGSA…GTNAHAIIEA (435 aa)). Catalysis depends on for beta-ketoacyl synthase activity residues Cys-177, His-316, and His-358. Residues 543 to 846 (IFTGQGTQWP…LDTIEAISEG (304 aa)) are malonyl-CoA:ACP transacylase (MAT) domain. The segment at 931-1066 (HPLLGRRCHD…AQIKASLGTP (136 aa)) is N-terminal hotdog fold. The dehydratase (DH) domain stretch occupies residues 931–1233 (HPLLGRRCHD…MELVPFSPAT (303 aa)). One can recognise a PKS/mFAS DH domain in the interval 931-1235 (HPLLGRRCHD…LVPFSPATPA (305 aa)). His-964 (proton acceptor; for dehydratase activity) is an active-site residue. The segment at 1081–1235 (LRPVSVDRFY…LVPFSPATPA (155 aa)) is C-terminal hotdog fold. The Proton donor; for dehydratase activity role is filled by Asp-1141. Residues 1381–1578 (YEQGFGLNLV…TTPPVHKILP (198 aa)) are methyltransferase (MT) domain. The ketoreductase (KR) domain stretch occupies residues 2105-2277 (TFLLIGLTGE…VAASSIDISS (173 aa)). The region spanning 2389 to 2464 (AIIKESFIVR…DLVDESLDLL (76 aa)) is the Carrier 1 domain. Residue Ser-2424 is modified to O-(pantetheine 4'-phosphoryl)serine. The segment at 2475–2555 (EAGNAHPAKP…TDNLTPPRTF (81 aa)) is disordered. Polar residues-rich tracts occupy residues 2487-2505 (VIPQ…QGTS) and 2513-2528 (GSDS…LTSW). Residues 2529–2541 (DRQDLSPPDKSDD) are compositionally biased toward basic and acidic residues. The span at 2542–2551 (APNSTDNLTP) shows a compositional bias: polar residues. The interval 2547–2976 (DNLTPPRTFP…TQVLLRSYLS (430 aa)) is condensation (C) domain. An adenylation (A) (KR) domain region spans residues 3000-3402 (LKVAVDAGKA…PDTFFGTSGT (403 aa)). One can recognise a Carrier 2 domain in the interval 3540 to 3617 (KSLTASEKRL…AMASVLEDCG (78 aa)). Position 3577 is an O-(pantetheine 4'-phosphoryl)serine (Ser-3577). A reductase (RED) domain region spans residues 3653-3870 (LTGSSGYLGR…MPVNEIVEAI (218 aa)).

This sequence in the C-terminal section; belongs to the NRP synthetase family.

The enzyme catalyses L-serine + 7 malonyl-CoA + acetyl-CoA + 2 S-adenosyl-L-methionine + ATP + 8 NADPH + 11 H(+) = (5S)-3-[(2E,6R,8E,10E,12E)-2,6-dimethyltetradeca-2,8,10,12-tetraenoyl]-5-(hydroxymethyl)pyrrolidine-2,4-dione + AMP + 2 S-adenosyl-L-homocysteine + 7 CO2 + diphosphate + 8 NADP(+) + 8 CoA + 6 H2O. Its pathway is mycotoxin biosynthesis. Functionally, hybrid PKS-NRPS synthetase; part of the gene cluster that mediates the biosynthesis of HIV-1 integrase inhibitor equisetin and of fusarisetin A, both trans-fused decalin-containing tetramic acids showing also antimicrobial activity. The PKS module of fsa1 together with the enoylreductase fsa3 catalyze the formation of the polyketide unit which is then conjugated to L-serine by the condensation domain of the fsa1 NRPS module. Activity of the Dieckmann cyclase domain (RED) results in release of the Dieckmann product intermediate. Diels-Alderase fsa2 is involved in endo-selective Diels-Alder cycloaddition to form the decalin ring, leading to the production of N-desmethylequisetin also called trichosetin. Subsequent N-methylation is carried out by fsa4 to give equisetin. The enzymatic gene responsible for the conversion of equisetin to fusarisetin A has not been identified yet and is probably located outside of the fsa cluster. The sequence is that of Hybrid PKS-NRPS synthetase fsa1 from Fusarium sp. (strain FN080326).